A 158-amino-acid polypeptide reads, in one-letter code: SsrA-binding protein (158 aa).

Belongs to the SmpB family.

The protein resides in the cytoplasm. Required for rescue of stalled ribosomes mediated by trans-translation. Binds to transfer-messenger RNA (tmRNA), required for stable association of tmRNA with ribosomes. tmRNA and SmpB together mimic tRNA shape, replacing the anticodon stem-loop with SmpB. tmRNA is encoded by the ssrA gene; the 2 termini fold to resemble tRNA(Ala) and it encodes a 'tag peptide', a short internal open reading frame. During trans-translation Ala-aminoacylated tmRNA acts like a tRNA, entering the A-site of stalled ribosomes, displacing the stalled mRNA. The ribosome then switches to translate the ORF on the tmRNA; the nascent peptide is terminated with the 'tag peptide' encoded by the tmRNA and targeted for degradation. The ribosome is freed to recommence translation, which seems to be the essential function of trans-translation. The polypeptide is SsrA-binding protein (Symbiobacterium thermophilum (strain DSM 24528 / JCM 14929 / IAM 14863 / T)).